A 279-amino-acid polypeptide reads, in one-letter code: Movement protein (279 aa).

The disordered stretch occupies residues 255–279; sequence SPPFAIGSPSASRNNSFRSQVVNGL. The span at 263–279 shows a compositional bias: polar residues; sequence PSASRNNSFRSQVVNGL.

Belongs to the cucumovirus movement protein family.

Its subcellular location is the host cell junction. The protein localises to the host plasmodesma. Transports viral genome to neighboring plant cells directly through plasmosdesmata, without any budding. The movement protein allows efficient cell to cell propagation, by bypassing the host cell wall barrier. Acts by forming a tubular structure at the host plasmodesmata, enlarging it enough to allow free passage of virion capsids. The sequence is that of Movement protein from Cucumis sativus (Cucumber).